The sequence spans 207 residues: PITH domain-containing protein P35G2.02 (207 aa).

The PITH domain maps to 13–189; it reads EHPFESGPND…PVVTIYEATP (177 aa).

Belongs to the PITHD1 family.

It is found in the cytoplasm. Its subcellular location is the nucleus. The polypeptide is PITH domain-containing protein P35G2.02 (Schizosaccharomyces pombe (strain 972 / ATCC 24843) (Fission yeast)).